The following is a 93-amino-acid chain: uncharacterized protein (93 aa).

This is an uncharacterized protein from Pasteurella multocida (strain Pm70).